A 312-amino-acid chain; its full sequence is uncharacterized protein (312 aa).

A run of 8 helical transmembrane segments spans residues 4–24 (IFLAGLAAGFQTTWTLGKVIF), 45–65 (LITPVMGLFGLSGEAAIPLVL), 75–95 (IAGILTLDLSVKEVFILAVML), 117–137 (VILAVRIGLAAVSAIVINLIW), 171–191 (GLGVLQLAAIVIPLMIIIQFL), 217–237 (TSMTMVTGLTIGLAYGAGVMI), 253–275 (AFIFLVACHAVVEDTLVFIPLGI), and 280–299 (LLLIRVTTAVLLTMAIAHTW).

The protein localises to the cell membrane. This is an uncharacterized protein from Bacillus subtilis (strain 168).